The chain runs to 130 residues: Small ribosomal subunit protein uS8 (130 aa).

Lysine 88 is subject to N6-succinyllysine.

This sequence belongs to the universal ribosomal protein uS8 family. Component of the small ribosomal subunit. Part of the small subunit (SSU) processome, composed of more than 70 proteins and the RNA chaperone small nucleolar RNA (snoRNA) U3.

The protein localises to the cytoplasm. It is found in the nucleus. The protein resides in the nucleolus. In terms of biological role, component of the small ribosomal subunit. The ribosome is a large ribonucleoprotein complex responsible for the synthesis of proteins in the cell. Part of the small subunit (SSU) processome, first precursor of the small eukaryotic ribosomal subunit. During the assembly of the SSU processome in the nucleolus, many ribosome biogenesis factors, an RNA chaperone and ribosomal proteins associate with the nascent pre-rRNA and work in concert to generate RNA folding, modifications, rearrangements and cleavage as well as targeted degradation of pre-ribosomal RNA by the RNA exosome. Required for proper erythropoiesis. This Mus musculus (Mouse) protein is Small ribosomal subunit protein uS8 (Rps15a).